Consider the following 361-residue polypeptide: Protein RecA (361 aa).

An ATP-binding site is contributed by 77–84 (GPESSGKT).

The protein belongs to the RecA family.

Its subcellular location is the cytoplasm. Functionally, can catalyze the hydrolysis of ATP in the presence of single-stranded DNA, the ATP-dependent uptake of single-stranded DNA by duplex DNA, and the ATP-dependent hybridization of homologous single-stranded DNAs. It interacts with LexA causing its activation and leading to its autocatalytic cleavage. This chain is Protein RecA, found in Sinorhizobium fredii (strain NBRC 101917 / NGR234).